The following is a 215-amino-acid chain: Large ribosomal subunit protein uL3 (215 aa).

Gln-156 carries the post-translational modification N5-methylglutamine.

It belongs to the universal ribosomal protein uL3 family. As to quaternary structure, part of the 50S ribosomal subunit. Forms a cluster with proteins L14 and L19. Methylated by PrmB.

One of the primary rRNA binding proteins, it binds directly near the 3'-end of the 23S rRNA, where it nucleates assembly of the 50S subunit. The protein is Large ribosomal subunit protein uL3 of Xylella fastidiosa (strain M12).